The sequence spans 787 residues: MKTEVTENIFEQAWDGFKGTNWRDKASVTRFVQENYKPYDGDESFLAGPTERTLKVKKIIEDTKNHYEEVGFPFDTDRVTSIDKIPAGYIDANDKELELIYGMQNSELFRLNFMPRGGLRVAEKILTEHGLSVDPGLHDVLSQTMTSVNDGIFRAYTSAIRKARHAHTVTGLPDAYSRGRIIGVYARLALYGADYLMKEKAKEWDAITEINDDNIRLKEEINMQYQALQEVVNFGALYGLDVSRPAMNVKEAIQWVNIAYMAVCRVINGAATSLGRVPIVLDIFAERDLARGTFTEQEIQEFVDDFILKLRTMKFARAAAYDELYSGDPTFITTSMAGMGNDGRHRVTKMDYRFLNTLDTIGNAPEPNLTVLWDSKLPYSFKRYSMSMSHKHSSIQYEGVETMAKDGYGEMSCISCCVSPLDPENEEGRHNLQYFGARVNVLKAMLTGLNGGYDDVHKDYKVFDIEPVRDEILDYDTVMENFDKSLNWLTDTYVDAMNIIHYMTDKYNYEAVQMAFLPTKVRANMGFGICGFANTVDSLSAIKYAKVKTLRDENGYIYDYEVEGDFPRYGEDDDRADDIAKLVMKMYHEKLASHKLYKNAEATVSLLTITSNVAYSKQTGNSPVHKGVFLNEDGTVNKSKLEFFSPGANPSNKAKGGWLQNLRSLAKLEFKDANDGISLTTQVSPRALGKTRDEQVDNLVQILDGYFTPGALINGTEFAGQHVNLNVMDLKDVYDKIMRGEDVIVRISGYCVNTKYLTPEQKQELTERVFHEVLSNDDEEVMHTSNI.

One can recognise a PFL domain in the interval 8–629; it reads NIFEQAWDGF…GNSPVHKGVF (622 aa). Cys416 (S-acetylcysteine intermediate) is an active-site residue. Cys417 acts as the Cysteine radical intermediate in catalysis. One can recognise a Glycine radical domain in the interval 645–774; that stretch reads SPGANPSNKA…LTERVFHEVL (130 aa). Glycine radical is present on Gly749.

Belongs to the glycyl radical enzyme (GRE) family. PFL subfamily. Homodimer.

It is found in the cytoplasm. It carries out the reaction formate + acetyl-CoA = pyruvate + CoA. Its pathway is fermentation; pyruvate fermentation; formate from pyruvate: step 1/1. In Lactococcus lactis subsp. cremoris (strain MG1363), this protein is Formate acetyltransferase (pfl).